A 217-amino-acid chain; its full sequence is Small ribosomal subunit protein uS3 (217 aa).

One can recognise a KH type-2 domain in the interval 29–97 (ADYLHEDLAI…AQLNKLTGKQ (69 aa)).

This sequence belongs to the universal ribosomal protein uS3 family. Part of the 30S ribosomal subunit. Forms a tight complex with proteins S10 and S14.

Binds the lower part of the 30S subunit head. Binds mRNA in the 70S ribosome, positioning it for translation. The protein is Small ribosomal subunit protein uS3 of Streptococcus mutans serotype c (strain ATCC 700610 / UA159).